A 428-amino-acid polypeptide reads, in one-letter code: Histidine--tRNA ligase (428 aa).

Belongs to the class-II aminoacyl-tRNA synthetase family. Homodimer.

Its subcellular location is the cytoplasm. It catalyses the reaction tRNA(His) + L-histidine + ATP = L-histidyl-tRNA(His) + AMP + diphosphate + H(+). The sequence is that of Histidine--tRNA ligase from Chlamydia trachomatis serovar L2 (strain ATCC VR-902B / DSM 19102 / 434/Bu).